The sequence spans 273 residues: Large ribosomal subunit protein uL2cz/uL2cy (273 aa).

Disordered stretches follow at residues 1–20 and 224–254; these read MAIHLYKTSTPSTRKGAVDS and NPVDHPHGGGEGRAPIGRKKPTTPWGYPALG.

This sequence belongs to the universal ribosomal protein uL2 family. In terms of assembly, part of the 50S ribosomal subunit.

The protein localises to the plastid. The protein resides in the chloroplast. This Nuphar advena (Common spatterdock) protein is Large ribosomal subunit protein uL2cz/uL2cy (rpl2-A).